Reading from the N-terminus, the 337-residue chain is Ketol-acid reductoisomerase (NADP(+)) (337 aa).

A KARI N-terminal Rossmann domain is found at 3-183; that stretch reads VEMFYDDDAD…GGTRAGVIKT (181 aa). Residues 26–29, K49, S52, S54, and 84–87 contribute to the NADP(+) site; these read YGSQ and DTAQ. H109 is an active-site residue. Position 135 (G135) interacts with NADP(+). The KARI C-terminal knotted domain occupies 184–329; it reads TFKEETETDL…KKLRDLMSWV (146 aa). Residues D192, E196, E228, and E232 each coordinate Mg(2+). Substrate is bound at residue S253.

The protein belongs to the ketol-acid reductoisomerase family. It depends on Mg(2+) as a cofactor.

It carries out the reaction (2R)-2,3-dihydroxy-3-methylbutanoate + NADP(+) = (2S)-2-acetolactate + NADPH + H(+). The enzyme catalyses (2R,3R)-2,3-dihydroxy-3-methylpentanoate + NADP(+) = (S)-2-ethyl-2-hydroxy-3-oxobutanoate + NADPH + H(+). Its pathway is amino-acid biosynthesis; L-isoleucine biosynthesis; L-isoleucine from 2-oxobutanoate: step 2/4. It participates in amino-acid biosynthesis; L-valine biosynthesis; L-valine from pyruvate: step 2/4. Its function is as follows. Involved in the biosynthesis of branched-chain amino acids (BCAA). Catalyzes an alkyl-migration followed by a ketol-acid reduction of (S)-2-acetolactate (S2AL) to yield (R)-2,3-dihydroxy-isovalerate. In the isomerase reaction, S2AL is rearranged via a Mg-dependent methyl migration to produce 3-hydroxy-3-methyl-2-ketobutyrate (HMKB). In the reductase reaction, this 2-ketoacid undergoes a metal-dependent reduction by NADPH to yield (R)-2,3-dihydroxy-isovalerate. The sequence is that of Ketol-acid reductoisomerase (NADP(+)) from Rhodococcus erythropolis (strain PR4 / NBRC 100887).